A 237-amino-acid chain; its full sequence is tRNA1(Val) (adenine(37)-N6)-methyltransferase (237 aa).

Belongs to the methyltransferase superfamily. tRNA (adenine-N(6)-)-methyltransferase family.

Its subcellular location is the cytoplasm. The catalysed reaction is adenosine(37) in tRNA1(Val) + S-adenosyl-L-methionine = N(6)-methyladenosine(37) in tRNA1(Val) + S-adenosyl-L-homocysteine + H(+). Its function is as follows. Specifically methylates the adenine in position 37 of tRNA(1)(Val) (anticodon cmo5UAC). The protein is tRNA1(Val) (adenine(37)-N6)-methyltransferase of Bacteroides thetaiotaomicron (strain ATCC 29148 / DSM 2079 / JCM 5827 / CCUG 10774 / NCTC 10582 / VPI-5482 / E50).